A 493-amino-acid chain; its full sequence is Xaa-Pro dipeptidase (493 aa).

Ala-2 bears the N-acetylalanine mark. Ser-167 is modified (phosphoserine). His-255 lines the a dipeptide pocket. Residues Asp-276, Asp-287, and His-370 each coordinate Mn(2+). Asp-287 contributes to the a dipeptide binding site. The a dipeptide site is built by His-377 and Arg-398. Mn(2+)-binding residues include Glu-412 and Glu-452.

It belongs to the peptidase M24B family. Eukaryotic-type prolidase subfamily. Homodimer. It depends on Mn(2+) as a cofactor.

It catalyses the reaction Xaa-L-Pro dipeptide + H2O = an L-alpha-amino acid + L-proline. With respect to regulation, specifically inhibited by the pseudodipeptide CQ31. Inhibition by CQ31 indirectly activates the CARD8 inflammasome: dipeptide accumulation following PEPD inactivation weaky inhibit dipeptidyl peptidases DDP8 and DPP9, relieving DPP8- and/or DPP9-mediated inhibition of CARD8. In terms of biological role, dipeptidase that catalyzes the hydrolysis of dipeptides with a prolyl (Xaa-Pro) or hydroxyprolyl residue in the C-terminal position. The preferred dipeptide substrate is Gly-Pro, but other Xaa-Pro dipeptides, such as Ala-Pro, Met-Pro, Phe-Pro, Val-Pro and Leu-Pro, can be cleaved. Plays an important role in collagen metabolism because the high level of iminoacids in collagen. This chain is Xaa-Pro dipeptidase, found in Homo sapiens (Human).